The primary structure comprises 281 residues: MIRDTKQPIKVPAKPASRSGGKAKTVKPKTIKPKTSAKAAAAKPASAKGLKGVIAVAPPSFRRERALIKRGIWPIAGCDEAGRGPLAGPVVAAAVVLDPKRVPKGLDDSKRLSAEKREALFEEICATAQVSVVYASPERINRDNILRASLWALTRAVHALPDLPRHVFVDGRDRLATKCDCEAVIGGDGLIASIAAASIIAKVSRDRLMCKLAEQCPGYGFEQHKGYGVPEHLDALARLGPTVHHRRFFAPVAAAWQKIEGAPPPQIRDLFEADVTVEATA.

Residues 1 to 46 (MIRDTKQPIKVPAKPASRSGGKAKTVKPKTIKPKTSAKAAAAKPAS) are disordered. The span at 33–46 (PKTSAKAAAAKPAS) shows a compositional bias: low complexity. The region spanning 73 to 261 (WPIAGCDEAG…VAAAWQKIEG (189 aa)) is the RNase H type-2 domain. Residues D79, E80, and D170 each contribute to the a divalent metal cation site.

This sequence belongs to the RNase HII family. Mn(2+) is required as a cofactor. Requires Mg(2+) as cofactor.

Its subcellular location is the cytoplasm. The catalysed reaction is Endonucleolytic cleavage to 5'-phosphomonoester.. Functionally, endonuclease that specifically degrades the RNA of RNA-DNA hybrids. The protein is Ribonuclease HII of Rhodopseudomonas palustris (strain TIE-1).